A 106-amino-acid chain; its full sequence is Iron-sulfur cluster assembly protein CyaY (106 aa).

The protein belongs to the frataxin family.

In terms of biological role, involved in iron-sulfur (Fe-S) cluster assembly. May act as a regulator of Fe-S biogenesis. This chain is Iron-sulfur cluster assembly protein CyaY, found in Klebsiella pneumoniae subsp. pneumoniae (strain ATCC 700721 / MGH 78578).